We begin with the raw amino-acid sequence, 215 residues long: Cytokinin riboside 5'-monophosphate phosphoribohydrolase LOG4 (215 aa).

Substrate contacts are provided by residues glutamate 84, 102 to 103, 119 to 125, and threonine 131; these read RK and GYGTLEE.

Belongs to the LOG family. As to expression, expressed in roots and shoots. Detected in root procambium, lateral root primordia, vascular tissues of cotyledons, leaves and stems, shoot apical meristem, axillary buds, young inflorescences, fruit abscission zones and basal part of ovules.

Its subcellular location is the cytoplasm. It is found in the nucleus. The catalysed reaction is N(6)-(dimethylallyl)adenosine 5'-phosphate + H2O = N(6)-dimethylallyladenine + D-ribose 5-phosphate. It carries out the reaction 9-ribosyl-trans-zeatin 5'-phosphate + H2O = trans-zeatin + D-ribose 5-phosphate. Cytokinin-activating enzyme working in the direct activation pathway. Phosphoribohydrolase that converts inactive cytokinin nucleotides to the biologically active free-base forms. The sequence is that of Cytokinin riboside 5'-monophosphate phosphoribohydrolase LOG4 (LOG4) from Arabidopsis thaliana (Mouse-ear cress).